The primary structure comprises 698 residues: Voltage-dependent calcium channel beta subunit-associated regulatory protein (698 aa).

Residues 1 to 41 lie on the Extracellular side of the membrane; the sequence is MQPTATMATAAATTATVALTTSWDNATSRPTAEPDPILDNY. N-linked (GlcNAc...) asparagine glycosylation occurs at asparagine 25. Residues 42–62 form a helical; Signal-anchor for type III membrane protein membrane-spanning segment; that stretch reads VLLVVVMSLFVGGTLVVLSGV. Topologically, residues 63-698 are cytoplasmic; sequence LLLCKRCWEV…APTSPDHSPA (636 aa). Disordered regions lie at residues 90 to 124 and 185 to 275; these read YLDN…TSST and ASAA…SSGS. The segment covering 185–197 has biased composition (low complexity); it reads ASAAATPHPATTS. Residues serine 290 and serine 295 each carry the phosphoserine modification. Disordered regions lie at residues 308-339, 360-421, 438-536, and 554-648; these read SQRA…EQEG, PPPR…HAQC, ATAS…RRDY, and PHFD…GSGL. A compositionally biased stretch (pro residues) spans 360–375; sequence PPPRPFLASPTSPPPT. Residues 402 to 413 show a composition bias toward low complexity; sequence PEHAQQQDPQQE. The segment covering 459 to 468 has biased composition (gly residues); it reads SGSGSGGGGA. The segment covering 471 to 482 has biased composition (pro residues); that stretch reads AFPPPPESPPAL. Over residues 483–493 the composition is skewed to basic and acidic residues; it reads RPKDGEARRLL. A phosphoserine mark is found at serine 501, serine 520, and serine 524. Positions 562 to 576 are enriched in basic residues; it reads HRTRAHPHTHARKQW. A Phosphoserine modification is found at serine 610. Threonine 691 carries the phosphothreonine modification. Residues serine 692 and serine 696 each carry the phosphoserine modification.

In terms of assembly, interacts with voltage-dependent calcium channels CACNB1, CACNB2, CACNB3 and CACNB4 beta subunits; prevents their interaction with the CACNA1C alpha subunit thereby negatively regulating the activity of the corresponding calcium channels. In terms of tissue distribution, expressed by neurons in the cortex, cerebellum and hippocampus and by pancreatic beta cells (at protein level).

The protein resides in the cytoplasmic vesicle. It is found in the secretory vesicle. The protein localises to the synaptic vesicle membrane. It localises to the cell membrane. Its subcellular location is the cell projection. The protein resides in the growth cone. Its function is as follows. Negatively regulates voltage-gated calcium channels by preventing the interaction between their alpha and beta subunits. Thereby, negatively regulates calcium channels activity at the plasma membrane and indirectly inhibits calcium-regulated exocytosis. This Mus musculus (Mouse) protein is Voltage-dependent calcium channel beta subunit-associated regulatory protein.